Consider the following 332-residue polypeptide: MSTKEKLIGHVMKEEPIGSRNKVTVVGVGMVGMASAVSILLKDLCDELALVDVMEDKLKGEAMDLQHGSLFLKTHKIVADKDYSVTANSRVVVVTAGARQQEGESRLNLVQRNVNIFKFIIPNIVKYSPNCILMVVSNPVDILTYVAWKLSGFPRHRVIGSGTNLDSARFRHIMGEKLHLHPSSCHGWIVGEHGDSSVPVWSGVNVAGVSLQTLNPKMGAEGDSENWKAVHKMVVDGAYEVIKLKGYTSWAIGMSVADLVESIVKNCTKCTQCPRWSRGMHGVKDEVFLSVPCVLGNSGLTDVIHMTLKPEEEKQLVKSAETLWGVQKELTL.

Residues 29-57 (GMVGMASAVSILLKDLCDELALVDVMEDK) and arginine 99 contribute to the NAD(+) site. Residues arginine 106, asparagine 138, and arginine 169 each coordinate substrate. Asparagine 138 is a binding site for NAD(+). The active-site Proton acceptor is histidine 193. Threonine 248 contacts substrate.

The protein belongs to the LDH/MDH superfamily. LDH family. As to quaternary structure, homotetramer.

It localises to the cytoplasm. It catalyses the reaction (S)-lactate + NAD(+) = pyruvate + NADH + H(+). Its pathway is fermentation; pyruvate fermentation to lactate; (S)-lactate from pyruvate: step 1/1. Functionally, interconverts simultaneously and stereospecifically pyruvate and lactate with concomitant interconversion of NADH and NAD(+). The sequence is that of L-lactate dehydrogenase A chain (ldha) from Sphyraena argentea (Pacific barracuda).